The following is a 215-amino-acid chain: RNA pyrophosphohydrolase (215 aa).

A Nudix hydrolase domain is found at 6–149; that stretch reads GFRPNVGIIL…KRDVYQLALT (144 aa). The Nudix box signature appears at 38–59; it reads GGIKYGETPMQAMYRELHEETG.

This sequence belongs to the Nudix hydrolase family. RppH subfamily. A divalent metal cation serves as cofactor.

Its function is as follows. Accelerates the degradation of transcripts by removing pyrophosphate from the 5'-end of triphosphorylated RNA, leading to a more labile monophosphorylated state that can stimulate subsequent ribonuclease cleavage. This is RNA pyrophosphohydrolase from Burkholderia multivorans (strain ATCC 17616 / 249).